The primary structure comprises 172 residues: Putative phosphoesterase BC_1225 (172 aa).

H34 functions as the Proton donor in the catalytic mechanism. 2 short sequence motifs (HXTX) span residues 34–37 (HITL) and 115–118 (HLTI). The Proton acceptor role is filled by H115.

Belongs to the 2H phosphoesterase superfamily. YjcG family.

The chain is Putative phosphoesterase BC_1225 from Bacillus cereus (strain ATCC 14579 / DSM 31 / CCUG 7414 / JCM 2152 / NBRC 15305 / NCIMB 9373 / NCTC 2599 / NRRL B-3711).